A 121-amino-acid chain; its full sequence is Type II secretion system protein I (121 aa).

A propeptide spans 1-6 (MRRQKG) (leader sequence). N-methylmethionine is present on Met7. A helical membrane pass occupies residues 7-27 (MTLVEVLVALSVFALAGIAVL).

This sequence belongs to the GSP I family. Type II secretion is composed of four main components: the outer membrane complex, the inner membrane complex, the cytoplasmic secretion ATPase and the periplasm-spanning pseudopilus. Interacts with core component OutG. In terms of processing, cleaved by prepilin peptidase. Post-translationally, methylated by prepilin peptidase at the amino group of the N-terminal methionine once the leader sequence is cleaved by prepilin peptidase.

Its subcellular location is the cell inner membrane. Component of the type II secretion system required for the energy-dependent secretion of extracellular factors such as proteases and toxins from the periplasm. Part of the pseudopilus tip complex that is critical for the recognition and binding of secretion substrates. The chain is Type II secretion system protein I (outI) from Pectobacterium carotovorum subsp. carotovorum (Erwinia carotovora subsp. carotovora).